A 378-amino-acid polypeptide reads, in one-letter code: DNA primase small subunit PriS (378 aa).

Residues Asp98, Asp100, and Asp282 contribute to the active site.

It belongs to the eukaryotic-type primase small subunit family. As to quaternary structure, heterodimer of a small subunit (PriS) and a large subunit (PriL). It depends on Mg(2+) as a cofactor. Mn(2+) serves as cofactor.

Its function is as follows. Catalytic subunit of DNA primase, an RNA polymerase that catalyzes the synthesis of short RNA molecules used as primers for DNA polymerase during DNA replication. The small subunit contains the primase catalytic core and has DNA synthesis activity on its own. Binding to the large subunit stabilizes and modulates the activity, increasing the rate of DNA synthesis while decreasing the length of the DNA fragments, and conferring RNA synthesis capability. The DNA polymerase activity may enable DNA primase to also catalyze primer extension after primer synthesis. May also play a role in DNA repair. This chain is DNA primase small subunit PriS, found in Methanosphaerula palustris (strain ATCC BAA-1556 / DSM 19958 / E1-9c).